We begin with the raw amino-acid sequence, 268 residues long: Photosystem II 22 kDa protein 1, chloroplastic (268 aa).

The transit peptide at 1 to 60 (MAQSMLVSGANGTVAAASTSRLQPVRPTPFSRLVLSQPSSSLGRAVSVKTVALFGRSKTK) directs the protein to the chloroplast. Tandem repeats lie at residues 54–161 (FGRS…FVDD) and 164–268 (VTGL…DDEE). The next 4 helical transmembrane spans lie at 99-119 (VAML…KGIL), 133-153 (AEPL…GALG), 199-219 (LFVG…EIIT), and 234-254 (PINE…IAAI).

This sequence belongs to the ELIP/psbS family. In terms of tissue distribution, expressed at low levels in leaves (at protein level).

It is found in the plastid. The protein localises to the chloroplast thylakoid membrane. Functionally, involved in high light-mediated energy-dependent nonphotochemical quenching (NPQ, qE) and thermal dissipation (TD) thus regulating energy conversion in photosystem II and protecting from photoinhibition. Also seems to regulate quantum yield of electron transport in fluctuating light conditions. The protein is Photosystem II 22 kDa protein 1, chloroplastic of Oryza sativa subsp. indica (Rice).